A 77-amino-acid chain; its full sequence is Acyl carrier protein (77 aa).

A Carrier domain is found at 1-76 (MSLEDDVKAI…DVIKYIQERQ (76 aa)). Position 36 is an O-(pantetheine 4'-phosphoryl)serine (S36).

The protein belongs to the acyl carrier protein (ACP) family. Post-translationally, 4'-phosphopantetheine is transferred from CoA to a specific serine of apo-ACP by AcpS. This modification is essential for activity because fatty acids are bound in thioester linkage to the sulfhydryl of the prosthetic group.

It is found in the cytoplasm. The protein operates within lipid metabolism; fatty acid biosynthesis. Carrier of the growing fatty acid chain in fatty acid biosynthesis. This chain is Acyl carrier protein, found in Chlamydia muridarum (strain MoPn / Nigg).